Consider the following 397-residue polypeptide: GDNF family receptor alpha-3 (397 aa).

The N-terminal stretch at 1–28 is a signal peptide; it reads MGLSWSPRPPLLMILLLVLSLWLPLGAG. Cys48 and Cys54 form a disulfide bridge. N-linked (GlcNAc...) asparagine glycosylation is found at Asn92 and Asn145. Intrachain disulfides connect Cys159–Cys215, Cys166–Cys172, Cys183–Cys193, Cys188–Cys236, Cys217–Cys224, Cys245–Cys313, Cys252–Cys258, Cys269–Cys285, Cys278–Cys337, and Cys315–Cys325. The N-linked (GlcNAc...) asparagine glycan is linked to Asn306. Asn371 is lipidated: GPI-anchor amidated asparagine. Residues 372-397 constitute a propeptide, removed in mature form; the sequence is PALRLQPRLPILSFSILPLILLQTLW.

This sequence belongs to the GDNFR family. In terms of assembly, interacts with ARTN ligand and RET: forms a 2:2:2 ternary complex composed of ARTN ligand, GFRA3 and RET receptor. Interacts with SORL1.

The protein localises to the cell membrane. In terms of biological role, receptor for artemin (ARTN), a growth factor that supports the survival of sensory and sympathetic peripheral neurons. ARTN-binding leads to autophosphorylation and activation of the RET receptor. The sequence is that of GDNF family receptor alpha-3 (Gfra3) from Mus musculus (Mouse).